The sequence spans 231 residues: Orotidine 5'-phosphate decarboxylase (231 aa).

Substrate-binding positions include D11, K34, 61–70 (DLKLHDIPNT), T117, R179, Q188, G208, and R209. K63 functions as the Proton donor in the catalytic mechanism.

The protein belongs to the OMP decarboxylase family. Type 1 subfamily. Homodimer.

The enzyme catalyses orotidine 5'-phosphate + H(+) = UMP + CO2. It functions in the pathway pyrimidine metabolism; UMP biosynthesis via de novo pathway; UMP from orotate: step 2/2. Catalyzes the decarboxylation of orotidine 5'-monophosphate (OMP) to uridine 5'-monophosphate (UMP). The protein is Orotidine 5'-phosphate decarboxylase of Streptococcus thermophilus (strain CNRZ 1066).